Here is a 210-residue protein sequence, read N- to C-terminus: Probable sporulation protein YtaF (210 aa).

Transmembrane regions (helical) follow at residues 6 to 26, 36 to 56, 69 to 89, 129 to 149, 162 to 184, and 190 to 210; these read ILLLALAVSLDSFSVGFTYGL, ILVIACCSGAVMFISMLIGSF, LGGLILVGIGAWVLYQFFKPA, VINGIEAVLLGFALSIDAFGA, VMSIAVAIMSSLFVSIGINAGHF, and WIDKMAFLPGLLLITIGLWKL.

It localises to the cell membrane. This Bacillus subtilis (strain 168) protein is Probable sporulation protein YtaF (ytaF).